The sequence spans 299 residues: Probable lipid kinase YegS (299 aa).

Positions 2–133 (AEFPASLLIL…IDMAQVNKQT (132 aa)) constitute a DAGKc domain. Residues Thr-40, 66-72 (GDGTINE), and Thr-95 contribute to the ATP site. The Mg(2+) site is built by Leu-215, Asp-218, and Leu-220. Glu-271 (proton acceptor) is an active-site residue.

The protein belongs to the diacylglycerol/lipid kinase family. YegS lipid kinase subfamily. Mg(2+) serves as cofactor. The cofactor is Ca(2+).

It is found in the cytoplasm. Its function is as follows. Probably phosphorylates lipids; the in vivo substrate is unknown. This Escherichia coli (strain K12 / MC4100 / BW2952) protein is Probable lipid kinase YegS.